Reading from the N-terminus, the 89-residue chain is Small ribosomal subunit protein uS15 (89 aa).

Belongs to the universal ribosomal protein uS15 family. Part of the 30S ribosomal subunit. Forms a bridge to the 50S subunit in the 70S ribosome, contacting the 23S rRNA.

Its function is as follows. One of the primary rRNA binding proteins, it binds directly to 16S rRNA where it helps nucleate assembly of the platform of the 30S subunit by binding and bridging several RNA helices of the 16S rRNA. Forms an intersubunit bridge (bridge B4) with the 23S rRNA of the 50S subunit in the ribosome. The polypeptide is Small ribosomal subunit protein uS15 (Hamiltonella defensa subsp. Acyrthosiphon pisum (strain 5AT)).